A 274-amino-acid chain; its full sequence is Syntaxin-12 (274 aa).

2 disordered regions span residues 1–20 (MSYGPLDMYRNPGPSGPQPR) and 128–147 (EKESIARARAGSRLSAEDRQ). S2 carries the post-translational modification N-acetylserine. Topologically, residues 2–250 (SYGPLDMYRN…AYYQKKSRKK (249 aa)) are cytoplasmic. The stretch at 33–130 (IQRISQATAQ…QRKVSEKEKE (98 aa)) forms a coiled coil. S139, S142, S218, and S225 each carry phosphoserine. In terms of domain architecture, t-SNARE coiled-coil homology spans 178-240 (LELIKERETA…ERATDQLQRA (63 aa)). A helical; Anchor for type IV membrane protein transmembrane segment spans residues 251–271 (MCILVLVLSVIVTVLVVVIWV). Topologically, residues 272 to 274 (ASK) are vesicular.

It belongs to the syntaxin family. Associates with the BLOC-1 complex. Interacts with BLOC1S6. Interacts with NAPA and SNAP23. Identified in a complex containing STX6, STX12, VAMP4 and VTI1A. Interacts with GRIPAP1. Forms a complex with GRIP1, GRIA2 and NSG1; controls the intracellular fate of AMPAR and the endosomal sorting of the GRIA2 subunit toward recycling and membrane targeting. Interacts with NSG1. Interacts with TPC1. Interacts (via N-terminus) with VPS13B.

It localises to the endosome membrane. The protein resides in the golgi apparatus membrane. It is found in the endomembrane system. The protein localises to the early endosome membrane. Its subcellular location is the recycling endosome membrane. Its function is as follows. SNARE promoting fusion of transport vesicles with target membranes. Together with SNARE STX6, promotes movement of vesicles from endosomes to the cell membrane, and may therefore function in the endocytic recycling pathway. Through complex formation with GRIP1, GRIA2 and NSG1 controls the intracellular fate of AMPAR and the endosomal sorting of the GRIA2 subunit toward recycling and membrane targeting. The protein is Syntaxin-12 (Stx12) of Mus musculus (Mouse).